A 104-amino-acid polypeptide reads, in one-letter code: Transcription elongation factor A protein-like 9 (104 aa).

The segment at Met1–Arg48 is disordered. Over residues Gly9–Glu31 the composition is skewed to basic and acidic residues. Over residues Gly32 to Ser41 the composition is skewed to acidic residues.

Belongs to the TFS-II family. TFA subfamily.

It localises to the nucleus. Functionally, may be involved in transcriptional regulation. The sequence is that of Transcription elongation factor A protein-like 9 (Tceal9) from Mus musculus (Mouse).